A 659-amino-acid polypeptide reads, in one-letter code: Putative oxidoreductase AegA (659 aa).

5 4Fe-4S ferredoxin-type domains span residues 3–22, 47–77, 78–107, 114–147, and 218–252; these read RFIM…EIAC, HQQQ…SHVD, DSIQ…IVLT, VKAT…LVTD, and DQAQ…WIEL. [4Fe-4S] cluster contacts are provided by cysteine 12, cysteine 15, cysteine 18, cysteine 22, cysteine 56, cysteine 59, cysteine 64, cysteine 68, cysteine 87, cysteine 90, cysteine 93, cysteine 97, cysteine 121, cysteine 124, cysteine 133, cysteine 137, cysteine 227, cysteine 230, cysteine 236, and cysteine 240.

It depends on [4Fe-4S] cluster as a cofactor.

Involved in formate-dependent uric acid degradation under microaerobic and anaerobic conditions. May reduce the enzymes necessary for uric acid degradation. The polypeptide is Putative oxidoreductase AegA (Escherichia coli (strain K12)).